A 318-amino-acid chain; its full sequence is Ribosomal RNA small subunit methyltransferase H (318 aa).

S-adenosyl-L-methionine-binding positions include 37–39 (GGH), Asp56, Tyr83, Asp104, and Gln111. A disordered region spans residues 293–318 (EEEIAENRRAAPARLRGAQRIREDAE).

The protein belongs to the methyltransferase superfamily. RsmH family.

The protein localises to the cytoplasm. The catalysed reaction is cytidine(1402) in 16S rRNA + S-adenosyl-L-methionine = N(4)-methylcytidine(1402) in 16S rRNA + S-adenosyl-L-homocysteine + H(+). Specifically methylates the N4 position of cytidine in position 1402 (C1402) of 16S rRNA. This chain is Ribosomal RNA small subunit methyltransferase H, found in Streptomyces avermitilis (strain ATCC 31267 / DSM 46492 / JCM 5070 / NBRC 14893 / NCIMB 12804 / NRRL 8165 / MA-4680).